The primary structure comprises 471 residues: Methyltransferase OMS1, mitochondrial (471 aa).

A mitochondrion-targeting transit peptide spans 1-39 (MIVFRRFPTCLLHHIRQPASRSLLLESQRRSLSFTSYKY). Residues 40 to 103 (NSSHIDDDKS…AIARSEKFSK (64 aa)) are Mitochondrial matrix-facing. Residues 104–123 (GMTKYMIGAYVIFLIYGLFF) form a helical membrane-spanning segment. At 124–471 (TKKLFAKDKE…LEPVPPVSKS (348 aa)) the chain is on the mitochondrial intermembrane side. The span at 450–463 (FEKKDDMASKKELE) shows a compositional bias: basic and acidic residues. The disordered stretch occupies residues 450-471 (FEKKDDMASKKELEPVPPVSKS).

The protein belongs to the methyltransferase superfamily. METL family.

It is found in the mitochondrion inner membrane. Functionally, mitochondrial methyltransferase which suppresses respiratory defects caused by OXA1 mutations when overexpressed. The protein is Methyltransferase OMS1, mitochondrial (OMS1) of Saccharomyces cerevisiae (strain ATCC 204508 / S288c) (Baker's yeast).